The following is a 154-amino-acid chain: Myoglobin (154 aa).

One can recognise a Globin domain in the interval 2-148 (GLSDGEWQLV…FRKDIAAKYK (147 aa)). The residue at position 4 (serine 4) is a Phosphoserine. Histidine 65 serves as a coordination point for nitrite. Histidine 65 is an O2 binding site. Threonine 68 carries the post-translational modification Phosphothreonine. Heme b is bound at residue histidine 94.

It belongs to the globin family. As to quaternary structure, monomeric.

The protein resides in the cytoplasm. Its subcellular location is the sarcoplasm. The enzyme catalyses Fe(III)-heme b-[protein] + nitric oxide + H2O = Fe(II)-heme b-[protein] + nitrite + 2 H(+). The catalysed reaction is H2O2 + AH2 = A + 2 H2O. Monomeric heme protein which primary function is to store oxygen and facilitate its diffusion within muscle tissues. Reversibly binds oxygen through a pentacoordinated heme iron and enables its timely and efficient release as needed during periods of heightened demand. Depending on the oxidative conditions of tissues and cells, and in addition to its ability to bind oxygen, it also has a nitrite reductase activity whereby it regulates the production of bioactive nitric oxide. Under stress conditions, like hypoxia and anoxia, it also protects cells against reactive oxygen species thanks to its pseudoperoxidase activity. The polypeptide is Myoglobin (MB) (Orcinus orca (Killer whale)).